Reading from the N-terminus, the 436-residue chain is p-aminobenzoyl-glutamate hydrolase subunit A (436 aa).

The protein belongs to the peptidase M20 family. Forms a heterodimer with AbgB. The cofactor is Mn(2+).

Component of the p-aminobenzoyl-glutamate hydrolase multicomponent enzyme system which catalyzes the cleavage of p-aminobenzoyl-glutamate (PABA-GLU) to form p-aminobenzoate (PABA) and glutamate. AbgAB does not degrade dipeptides and the physiological role of abgABT should be clarified. This Escherichia coli (strain K12) protein is p-aminobenzoyl-glutamate hydrolase subunit A (abgA).